A 404-amino-acid polypeptide reads, in one-letter code: Cysteine desulfurase IscS (404 aa).

Residues 73–74 (AT), Asn-153, Gln-181, and 201–203 (SAH) each bind pyridoxal 5'-phosphate. Residue Lys-204 is modified to N6-(pyridoxal phosphate)lysine. Thr-241 contributes to the pyridoxal 5'-phosphate binding site. Cys-327 (cysteine persulfide intermediate) is an active-site residue. Residue Cys-327 participates in [2Fe-2S] cluster binding.

The protein belongs to the class-V pyridoxal-phosphate-dependent aminotransferase family. NifS/IscS subfamily. Homodimer. Forms a heterotetramer with IscU, interacts with other sulfur acceptors. Pyridoxal 5'-phosphate serves as cofactor.

The protein localises to the cytoplasm. The catalysed reaction is (sulfur carrier)-H + L-cysteine = (sulfur carrier)-SH + L-alanine. Its pathway is cofactor biosynthesis; iron-sulfur cluster biosynthesis. Its function is as follows. Master enzyme that delivers sulfur to a number of partners involved in Fe-S cluster assembly, tRNA modification or cofactor biosynthesis. Catalyzes the removal of elemental sulfur atoms from cysteine to produce alanine. Functions as a sulfur delivery protein for Fe-S cluster synthesis onto IscU, an Fe-S scaffold assembly protein, as well as other S acceptor proteins. The sequence is that of Cysteine desulfurase IscS from Anaeromyxobacter sp. (strain K).